Reading from the N-terminus, the 920-residue chain is Probable helicase HelY (920 aa).

The Helicase ATP-binding domain occupies 26–184 (CAALERGHGV…WVQTVRGDTT (159 aa)). 39-46 (APTGAGKT) is an ATP binding site. The short motif at 132 to 135 (DEVH) is the DEVH box element. The Helicase C-terminal domain occupies 265-469 (EVIAILDAEG…SYNMTINLVH (205 aa)).

The protein belongs to the helicase family. SKI2 subfamily.

The protein is Probable helicase HelY (helY) of Mycobacterium leprae (strain TN).